The sequence spans 109 residues: Sperm-specific class P protein 16 (109 aa).

Residues 2–109 (SLTADPPACT…TVTIPMSATA (108 aa)) enclose the MSP domain.

Expressed at higher level in testis.

This chain is Sperm-specific class P protein 16 (ssp-16), found in Caenorhabditis elegans.